The following is a 213-amino-acid chain: uncharacterized protein (213 aa).

Residues glycine 53, glutamate 74, and aspartate 97 each coordinate S-adenosyl-L-methionine.

Belongs to the methyltransferase superfamily. YrrT family.

Could be a S-adenosyl-L-methionine-dependent methyltransferase. This is an uncharacterized protein from Bacillus subtilis (strain 168).